The following is a 215-amino-acid chain: ATP phosphoribosyltransferase (215 aa).

It belongs to the ATP phosphoribosyltransferase family. Short subfamily. In terms of assembly, heteromultimer composed of HisG and HisZ subunits.

The protein resides in the cytoplasm. It carries out the reaction 1-(5-phospho-beta-D-ribosyl)-ATP + diphosphate = 5-phospho-alpha-D-ribose 1-diphosphate + ATP. Its pathway is amino-acid biosynthesis; L-histidine biosynthesis; L-histidine from 5-phospho-alpha-D-ribose 1-diphosphate: step 1/9. Functionally, catalyzes the condensation of ATP and 5-phosphoribose 1-diphosphate to form N'-(5'-phosphoribosyl)-ATP (PR-ATP). Has a crucial role in the pathway because the rate of histidine biosynthesis seems to be controlled primarily by regulation of HisG enzymatic activity. The chain is ATP phosphoribosyltransferase (hisG) from Clostridium acetobutylicum (strain ATCC 824 / DSM 792 / JCM 1419 / IAM 19013 / LMG 5710 / NBRC 13948 / NRRL B-527 / VKM B-1787 / 2291 / W).